Consider the following 246-residue polypeptide: Carbonic anhydrase (246 aa).

An N-terminal signal peptide occupies residues 1–22; that stretch reads MKTSLGKAALLALSMMPVTVFA. One can recognise an Alpha-carbonic anhydrase domain in the interval 23 to 246; that stretch reads SHWSYEGEGS…QPLNGRVVIE (224 aa). An intrachain disulfide couples cysteine 46 to cysteine 201. Catalysis depends on histidine 84, which acts as the Proton acceptor. Zn(2+)-binding residues include histidine 111, histidine 113, and histidine 130. 197-198 is a substrate binding site; sequence TT.

The protein belongs to the alpha-carbonic anhydrase family. Requires Zn(2+) as cofactor.

The protein localises to the periplasm. The enzyme catalyses hydrogencarbonate + H(+) = CO2 + H2O. Reversible hydration of carbon dioxide. This is Carbonic anhydrase (cah) from Klebsiella pneumoniae.